The primary structure comprises 883 residues: MLSRLFRMHGQFVASHPWEVIVGTVTLTICMMSMNMFTGNDKICGWNYACPKFEEDVLSSDIIILTITRCIAILYIYFQFQNLRQLGSKYILGIAGLFTIFSSFVFSTVVIHFLDKELTGLNEALPFFLLLIDLSKASALAKFALSSNSQDEVRDNIARGMAILGPTFTLEALVECLVIGVGTMSGVRQLEIMCCFGCMSVLANYFAFMTFFPACVSLVLELSRESREGRPIWQLSQFASVLEEEEDNKPNPVTQRVKMIMSLGLVLVHAHSRWISEPSSQNSTSISDHEVTTMLDDMMPKRVEPSMPLWQFYLSRMVTMDVEQIITLGLALLLAVKYIFFEQTETESTFSMKNPIISPVAVQKKQIESCCRREPEQEKTVHVSTTEEASSKEETEAVIKPLPLETSPKAKFIVGDSSPLELSPEDKNTMFDLPEEPRPLDECVRILKNPDKGAQYLTDAEVISLVNAKHIPAYKLETMMESPREGVAIRRQMLSDKLPQRSALQSLPYKNYNYSLVMGACCENVIGYMPIPVGVAGPLLLNNKEYQVPMATTEGCLVASTNRGCRAIMLGGGAKSRVLADGMTRGPVVRLPTACDAAEVKAWLDSAEGFKVIKDAFDSTSRFARLGRLQNCVAGRNLYIRFQSKTGDAMGMNMISKVTEQALARLQEEFPDLHVLAVSGNYCTDKKPAAINWIEGRGKSVVCEAIIPAKVVREVLKSSTEALVEVNINKNFIGSAMAGSIGGYNAHAANIVTAIYIACGQDAAQNVGSSNCITIMEATGPTYEDLYISCTMPSIEIGTVGGGTNLAPQQACLQMLGVQGASTETPGKNACQLAQIVCSTVMAGELSLMAALAAGHLVKSHMVHNRSKINLQDLPGTCTKKAA.

At 1–9 (MLSRLFRMH) the chain is on the cytoplasmic side. The helical transmembrane segment at 10 to 39 (GQFVASHPWEVIVGTVTLTICMMSMNMFTG) threads the bilayer. Topologically, residues 40-56 (NDKICGWNYACPKFEED) are lumenal. Residues 57-78 (VLSSDIIILTITRCIAILYIYF) traverse the membrane as a helical segment. The Cytoplasmic portion of the chain corresponds to 79 to 89 (QFQNLRQLGSK). The chain crosses the membrane as a helical span at residues 90–114 (YILGIAGLFTIFSSFVFSTVVIHFL). Residues 115 to 123 (DKELTGLNE) are Lumenal-facing. The chain crosses the membrane as a helical span at residues 124 to 149 (ALPFFLLLIDLSKASALAKFALSSNS). Residues 150 to 159 (QDEVRDNIAR) lie on the Cytoplasmic side of the membrane. A helical transmembrane segment spans residues 160–187 (GMAILGPTFTLEALVECLVIGVGTMSGV). The Lumenal portion of the chain corresponds to 188–191 (RQLE). A helical membrane pass occupies residues 192–220 (IMCCFGCMSVLANYFAFMTFFPACVSLVL). Over 221 to 249 (ELSRESREGRPIWQLSQFASVLEEEEDNK) the chain is Cytoplasmic. A helical membrane pass occupies residues 250–276 (PNPVTQRVKMIMSLGLVLVHAHSRWIS). Residues 277-316 (EPSSQNSTSISDHEVTTMLDDMMPKRVEPSMPLWQFYLSR) lie on the Lumenal side of the membrane. N282 carries an N-linked (GlcNAc...) asparagine glycan. A helical transmembrane segment spans residues 317 to 341 (MVTMDVEQIITLGLALLLAVKYIFF). The Cytoplasmic segment spans residues 342–883 (EQTETESTFS…LPGTCTKKAA (542 aa)). The tract at residues 373–396 (REPEQEKTVHVSTTEEASSKEETE) is disordered. Residues E554, K686, and D762 each act as charge relay system in the active site. The active-site Proton donor is the H861.

The protein belongs to the HMG-CoA reductase family. Homotetramer. Homodimer.

It localises to the endoplasmic reticulum membrane. It is found in the peroxisome membrane. It catalyses the reaction (R)-mevalonate + 2 NADP(+) + CoA = (3S)-3-hydroxy-3-methylglutaryl-CoA + 2 NADPH + 2 H(+). It participates in metabolic intermediate biosynthesis; (R)-mevalonate biosynthesis; (R)-mevalonate from acetyl-CoA: step 3/3. Its function is as follows. Catalyzes the conversion of (3S)-hydroxy-3-methylglutaryl-CoA (HMG-CoA) to mevalonic acid, the rate-limiting step in the synthesis of cholesterol and other isoprenoids, thus plays a critical role in cellular cholesterol homeostasis. This is 3-hydroxy-3-methylglutaryl-coenzyme A reductase (hmgcr) from Xenopus laevis (African clawed frog).